Consider the following 483-residue polypeptide: MPTAQLLLLACLLWGLEARTAQLRKANDRSGRCQYIFSVASPNESSCPEQGQAMSAIQDLQRDLESTKARLSSLEGLLHQLTLGQAAGPSESQEGLHRELGTLRKEREQLETQARELEVAYSNLLRDKSALEEEKRRLGEENEDLAQRLEHSSQEVARLRRGQCPQAHSSSQDVPAGSREVSKWNVETVNFQELKSELTEVPASRILKESPSGHPRNEEGDSGCGELVWVGEPLTLRTAETITGKYGVWMRDPKPTYPHTRETTWRIDTVGTDIRQVFEYELASQFLQGYPSKVHVLPRPLESTGAVVYRGSLYFQGAGSGTVVRYELTAETVKAEREIPGAGYHGQFPYSWGGYTDIDLAVDETGLWVIYSTQEAKGAIVLSKLNPETLELEQTWETNIRKQSVANAFVICGHLYTISSYSSPDATVNFAYDTGTGRSRVLSIPFKNRYKYSSMIDYNPLEKKLFAWDNFNMVTYDIRLSKM.

The signal sequence occupies residues 1–18 (MPTAQLLLLACLLWGLEA). A glycan (N-linked (GlcNAc...) asparagine) is linked at asparagine 43. The stretch at 51–162 (GQAMSAIQDL…SQEVARLRRG (112 aa)) forms a coiled coil. The segment at 153–179 (SQEVARLRRGQCPQAHSSSQDVPAGSR) is disordered. The Olfactomedin-like domain maps to 223–482 (GCGELVWVGE…MVTYDIRLSK (260 aa)). Cysteines 224 and 412 form a disulfide. Ca(2+)-binding residues include aspartate 359, asparagine 407, alanine 408, isoleucine 456, and aspartate 457. The Microbody targeting signal motif lies at 481-483 (SKM).

In terms of assembly, homodimer (via N-terminus). Can also form higher oligomers. Interacts with OLFM3, FN1, NRCAM, GLDN and NFASC. Interacts (via N-terminus) with MYL2. Interacts with SFRP1, FRZB, FZD7, FZD10, FZD1 and WIF1; regulates Wnt signaling. Interacts with SNTA1; regulates muscle hypertrophy. Interacts with ERBB2 and ERBB3; activates ERBB2-ERBB3 signaling pathway. Interacts with SNCG; affects its secretion and its aggregation. In terms of processing, N-glycosylated. Post-translationally, palmitoylated. Undergoes a calcium-dependent proteolytic cleavage at Arg-205 by CAPN2 in the endoplasmic reticulum. The result is the production of two fragments, one of 35 kDa containing the C-terminal olfactomedin-like domain, and another of 20 kDa containing the N-terminal leucine zipper-like domain. As to expression, expressed in optic nerve head, ciliary body and retina.

The protein localises to the secreted. The protein resides in the golgi apparatus. It localises to the cytoplasmic vesicle. It is found in the extracellular space. Its subcellular location is the extracellular matrix. The protein localises to the extracellular exosome. The protein resides in the mitochondrion. It localises to the mitochondrion intermembrane space. It is found in the mitochondrion inner membrane. Its subcellular location is the mitochondrion outer membrane. The protein localises to the rough endoplasmic reticulum. The protein resides in the cell projection. It localises to the cilium. It is found in the endoplasmic reticulum. Functionally, secreted glycoprotein regulating the activation of different signaling pathways in adjacent cells to control different processes including cell adhesion, cell-matrix adhesion, cytoskeleton organization and cell migration. Promotes substrate adhesion, spreading and formation of focal contacts. Negatively regulates cell-matrix adhesion and stress fiber assembly through Rho protein signal transduction. Modulates the organization of actin cytoskeleton by stimulating the formation of stress fibers through interactions with components of Wnt signaling pathways. Promotes cell migration through activation of PTK2 and the downstream phosphatidylinositol 3-kinase signaling. Plays a role in bone formation and promotes osteoblast differentiation in a dose-dependent manner through mitogen-activated protein kinase signaling. Mediates myelination in the peripheral nervous system through ERBB2/ERBB3 signaling. Plays a role as a regulator of muscle hypertrophy through the components of dystrophin-associated protein complex. Involved in positive regulation of mitochondrial depolarization. Plays a role in neurite outgrowth. May participate in the obstruction of fluid outflow in the trabecular meshwork. This Canis lupus familiaris (Dog) protein is Myocilin (MYOC).